Here is an 82-residue protein sequence, read N- to C-terminus: U16-lycotoxin-Ls1b (82 aa).

The first 22 residues, Met1–Ala22, serve as a signal peptide directing secretion. Residues Glu23–Arg34 constitute a propeptide that is removed on maturation. 4 disulfides stabilise this stretch: Cys36-Cys51, Cys43-Cys56, Cys50-Cys67, and Cys58-Cys65.

Belongs to the neurotoxin 02 (plectoxin) family. 04 (U16-lycotoxin) subfamily. In terms of tissue distribution, expressed by the venom gland.

It localises to the secreted. The chain is U16-lycotoxin-Ls1b from Lycosa singoriensis (Wolf spider).